The primary structure comprises 463 residues: Chromogranin-A (463 aa).

The signal sequence occupies residues 1–18; that stretch reads MRSTAVLALLLCAGQVFA. Cysteine 35 and cysteine 56 are joined by a disulfide. Residues 88 to 440 are disordered; that stretch reads KERAQQPLKQ…ANRRAEDQEL (353 aa). The span at 92–116 shows a compositional bias: low complexity; it reads QQPLKQQQPPKQQQQQQQQQQQEQQ. Serine 119 carries the phosphoserine modification. The segment covering 134 to 160 has biased composition (basic and acidic residues); that stretch reads DAKHRDAAAEVPSRDTMEKRKDSDKGQ. The span at 196–208 shows a compositional bias: polar residues; that stretch reads TATNTQSPTSLPS. Serine 220, serine 282, and serine 308 each carry phosphoserine. A compositionally biased stretch (basic and acidic residues) spans 301 to 310; sequence GKGELEHSQQ. A Glycine amide modification is found at glycine 329. 2 stretches are compositionally biased toward basic and acidic residues: residues 331-340 and 348-375; these read KGRELEHKQE and RLSR…KRLE. A phosphoserine mark is found at serine 350 and serine 383. Residue methionine 384 is modified to Methionine sulfoxide. Residues 409-437 are compositionally biased toward basic and acidic residues; sequence SSREDSVEARSDFEEKKEEEGSANRRAED. Residues serine 410, serine 414, and serine 430 each carry the phosphoserine modification. A glycan (O-linked (Xyl...) (chondroitin sulfate) serine) is linked at serine 430. Glutamine 438 bears the Pyrrolidone carboxylic acid mark. Phosphoserine is present on serine 444.

It belongs to the chromogranin/secretogranin protein family. Self-interacts; self-assembly is promoted in vitro by chondroitin sulfate attachment which occurs at mildly acidic pH conditions. Interacts with SCG3; this interaction is optimal in conditions mimicking the lumenal milieu of the trans-Golgi network, i.e. pH 5.5 and 10 mM Ca(+2). Interacts with ITPR1 in the secretory granules. In terms of processing, O-glycosylated; contains chondroitin sulfate (CS). CS attachment is pH-dependent, being observed at mildly acidic conditions of pH 5 but not at neutral pH, and promotes self-assembly in vitro.

Its subcellular location is the cytoplasmic vesicle. The protein localises to the secretory vesicle. The protein resides in the neuronal dense core vesicle. It is found in the secreted. In terms of biological role, strongly inhibits glucose induced insulin release from the pancreas. Functionally, inhibits catecholamine release from chromaffin cells and noradrenergic neurons by acting as a non-competitive nicotinic cholinergic antagonist. Can induce mast cell migration, degranulation and production of cytokines and chemokines. Its function is as follows. Regulates granule biogenesis in endocrine cells by up-regulating the transcription of protease nexin 1 (SERPINE2) via a cAMP-PKA-SP1 pathway. This leads to inhibition of granule protein degradation in the Golgi complex which in turn promotes granule formation. Pyroglutaminated (pGlu)-serpinin exerts an antiapoptotic effect on cells exposed to oxidative stress. The chain is Chromogranin-A (Chga) from Mus musculus (Mouse).